The sequence spans 96 residues: Large ribosomal subunit protein uL23 (96 aa).

The protein belongs to the universal ribosomal protein uL23 family. As to quaternary structure, part of the 50S ribosomal subunit. Contacts protein L29, and trigger factor when it is bound to the ribosome.

In terms of biological role, one of the early assembly proteins it binds 23S rRNA. One of the proteins that surrounds the polypeptide exit tunnel on the outside of the ribosome. Forms the main docking site for trigger factor binding to the ribosome. This Aster yellows witches'-broom phytoplasma (strain AYWB) protein is Large ribosomal subunit protein uL23.